Consider the following 241-residue polypeptide: Probable 2-phosphosulfolactate phosphatase (241 aa).

Belongs to the ComB family. Mg(2+) is required as a cofactor.

It catalyses the reaction (2R)-O-phospho-3-sulfolactate + H2O = (2R)-3-sulfolactate + phosphate. This chain is Probable 2-phosphosulfolactate phosphatase, found in Gloeothece citriformis (strain PCC 7424) (Cyanothece sp. (strain PCC 7424)).